Here is a 380-residue protein sequence, read N- to C-terminus: Erythronate-4-phosphate dehydrogenase (380 aa).

2 residues coordinate substrate: Ser-45 and Thr-66. NAD(+) contacts are provided by residues 126 to 127, Asp-146, Thr-174, 205 to 207, and Asp-231; these read QV and ASR. Residue Arg-207 is part of the active site. Glu-236 is an active-site residue. The active-site Proton donor is His-253. Residue Gly-256 participates in NAD(+) binding. Tyr-257 lines the substrate pocket.

The protein belongs to the D-isomer specific 2-hydroxyacid dehydrogenase family. PdxB subfamily. In terms of assembly, homodimer.

It localises to the cytoplasm. The enzyme catalyses 4-phospho-D-erythronate + NAD(+) = (R)-3-hydroxy-2-oxo-4-phosphooxybutanoate + NADH + H(+). Its pathway is cofactor biosynthesis; pyridoxine 5'-phosphate biosynthesis; pyridoxine 5'-phosphate from D-erythrose 4-phosphate: step 2/5. Catalyzes the oxidation of erythronate-4-phosphate to 3-hydroxy-2-oxo-4-phosphonooxybutanoate. This chain is Erythronate-4-phosphate dehydrogenase, found in Pseudomonas syringae pv. syringae (strain B728a).